A 202-amino-acid chain; its full sequence is Small ribosomal subunit protein uS5 (202 aa).

Positions 50 to 113 (LKQEILNINV…REAKLNLTPV (64 aa)) constitute an S5 DRBM domain.

Belongs to the universal ribosomal protein uS5 family. Part of the 30S ribosomal subunit. Contacts protein S4.

Functionally, with S4 and S12 plays an important role in translational accuracy. The sequence is that of Small ribosomal subunit protein uS5 from Pyrobaculum islandicum (strain DSM 4184 / JCM 9189 / GEO3).